The primary structure comprises 252 residues: E3 ubiquitin-protein ligase MARCHF3 (252 aa).

The segment at 62–122 (SSFNDHPMCR…ELCHFRFSVE (61 aa)) adopts an RING-CH-type zinc-finger fold. Zn(2+) is bound by residues Cys-70, Cys-73, Cys-86, Cys-88, His-96, Cys-99, Cys-112, and Cys-115. Helical transmembrane passes span 144-164 (LFGDMVCFLFITPLATISGWL) and 181-201 (AVGLIALTVALFTIYLFWTLV).

The protein resides in the cytoplasmic vesicle membrane. It is found in the early endosome membrane. It carries out the reaction S-ubiquitinyl-[E2 ubiquitin-conjugating enzyme]-L-cysteine + [acceptor protein]-L-lysine = [E2 ubiquitin-conjugating enzyme]-L-cysteine + N(6)-ubiquitinyl-[acceptor protein]-L-lysine.. The protein operates within protein modification; protein ubiquitination. Functionally, E3 ubiquitin-protein ligase which may be involved in endosomal trafficking. E3 ubiquitin ligases accept ubiquitin from an E2 ubiquitin-conjugating enzyme in the form of a thioester and then directly transfer the ubiquitin to targeted substrates. The chain is E3 ubiquitin-protein ligase MARCHF3 (marchf3) from Xenopus laevis (African clawed frog).